The chain runs to 215 residues: Protein NETWORKED 3B (215 aa).

One can recognise an NAB domain in the interval 5–90; it reads SKWWWIGANH…QKHDLLIKTS (86 aa). A coiled-coil region spans residues 134–165; the sequence is DETMKEELEILREENRVYKEKKEVVTRLLANL.

The protein belongs to the NET family. As to quaternary structure, interacts with F-actin.

Functionally, plant-specific actin binding protein. May be part of a membrane-cytoskeletal adapter complex. The chain is Protein NETWORKED 3B from Arabidopsis thaliana (Mouse-ear cress).